A 632-amino-acid chain; its full sequence is tRNA-guanine(15) transglycosylase (632 aa).

Asp-86 functions as the Nucleophile in the catalytic mechanism. Positions 121 and 186 each coordinate substrate. The 76-residue stretch at 553–628 (AMRVTVSKES…IAVKVHEGRD (76 aa)) folds into the PUA domain.

The protein belongs to the archaeosine tRNA-ribosyltransferase family. Zn(2+) serves as cofactor.

It catalyses the reaction guanosine(15) in tRNA + 7-cyano-7-deazaguanine = 7-cyano-7-carbaguanosine(15) in tRNA + guanine. The protein operates within tRNA modification; archaeosine-tRNA biosynthesis. Exchanges the guanine residue with 7-cyano-7-deazaguanine (preQ0) at position 15 in the dihydrouridine loop (D-loop) of archaeal tRNAs. This Thermoplasma acidophilum (strain ATCC 25905 / DSM 1728 / JCM 9062 / NBRC 15155 / AMRC-C165) protein is tRNA-guanine(15) transglycosylase.